Consider the following 942-residue polypeptide: MPPRYPFGGGAQSDEAHHQPLERRTTAEAQGNSFTHGHTAYPTYDMGAEPHSPPHVSYDPYLPPSTSGDHSGYEMPSANYNDHHRSSYPQAIHSPPRMTNPYANSQPRQGSADPFDEHDGDVPLLPRGGNYAYAPASHFDEHGNHVGPVDKYADGDDDVMDEDAVNGQARGRLLHTQVPHDDDYMPGGFDPNVLENGQAGGVRFGKIPQRVPRRYKTLKRVELYHGNLVLDCPVPSKLLDKLNDRESREFTHMRYTAATCDPDEFKTERYTLRQVLFDPPRRTELFIVLTMYNEDEELFTRTMHGVMTNIAHLCTRERSKTWGKEGWKKVVVCIVSDGRLKINSRTLACLAAMGVYQEGVGKNVVNGKPVTAHIYEYTAQLSIDPSMHFKGREKGIMPVQILFCLKERNQKKINSHRWFFNAFGQILQPNICVLLDVGTMPRPRSIYHLWKAFDINSNVGGACGEIVALKGKFWGALLNPLVAAQNFEYKMSNILDKPLESVFGYITVLPGAFSAYRYIALQNDAHGQGPLCSYFKGETLHGGQSDADVFTSNMYLAEDRILCWELVSKRDSAWILHYVKSAQAVTDVPDQVPELISQRRRWLNGSFFAGIHSIIKFGYIYRSSHSFGRKFALHIEIIYQTIQLIFSWFGMANFFIAFFILTSAMSDKIHALKVPNLVLSYIYVAFIIFCFLLSMGNRPAGSKAGYTLAMVVFALLTVYMTGAAIYLAVDSILNATGPNGGGTDALVSNRTFVNIVISLAATFGIWLIASIMFLEPMHMVTSIVQYLLMAPTFVNVISIYAFANINDISWGTKGSDKVMTDLGVVGGSGNNQVEVAIPTESKDINDAYDDAIHVLSNKAPKAGPGPVDKEQKQKDYYATVRTNVVLCWSLSNAALVVGILNISSIGTRTIYMGFLLYSVAGLALFRMMGSTIYLIKRLFSGE.

The interval 1–124 is disordered; the sequence is MPPRYPFGGG…FDEHDGDVPL (124 aa). Basic and acidic residues predominate over residues 14–26; that stretch reads DEAHHQPLERRTT. Residues 27 to 36 show a composition bias toward polar residues; sequence AEAQGNSFTH. An N-linked (GlcNAc...) asparagine glycan is attached at Asn604. The next 7 membrane-spanning stretches (helical) occupy residues 641–661, 674–694, 709–729, 755–775, 783–803, 885–905, and 909–929; these read TIQL…FFIL, VPNL…FLLS, AMVV…YLAV, IVIS…MFLE, IVQY…YAFA, VLCW…ISSI, and TIYM…RMMG.

It belongs to the chitin synthase family. Class I subfamily.

Its subcellular location is the cell membrane. It is found in the cytoplasmic vesicle membrane. The enzyme catalyses [(1-&gt;4)-N-acetyl-beta-D-glucosaminyl](n) + UDP-N-acetyl-alpha-D-glucosamine = [(1-&gt;4)-N-acetyl-beta-D-glucosaminyl](n+1) + UDP + H(+). Functionally, polymerizes chitin, a structural polymer of the cell wall and septum, by transferring the sugar moiety of UDP-GlcNAc to the non-reducing end of the growing chitin polymer. In Mycosarcoma maydis (Corn smut fungus), this protein is Chitin synthase 4.